We begin with the raw amino-acid sequence, 346 residues long: Propane 2-monooxygenase, reductase component (346 aa).

Residues 5-94 (HKISFEPVDI…DCEIELLNFD (90 aa)) form the 2Fe-2S ferredoxin-type domain. Residues cysteine 39, cysteine 44, cysteine 46, and cysteine 78 each coordinate [2Fe-2S] cluster. An FAD-binding FR-type domain is found at 104-205 (IQDVTTKVAA…NGPYGSCTLR (102 aa)).

It belongs to the bacterial ring-hydroxylating dioxygenase ferredoxin reductase family. The propane 2-monooxygenase multicomponent enzyme system is composed of an electron transfer component and a monooxygenase component interacting with the effector protein PrmD. The electron transfer component is composed of a reductase (PrmB), and the monooxygenase component is formed by a large subunit (PrmA) and a small subunit (PrmC). The cofactor is FAD. [2Fe-2S] cluster is required as a cofactor.

In terms of biological role, reductase component of the propane 2-monooxygenase multicomponent enzyme system which is involved in the degradation of propane via the O2-dependent hydroxylation of propane. Reductase catalyzes the transfer of electrons from NADH or NADPH to monooxygenase. This is Propane 2-monooxygenase, reductase component from Gordonia sp. (strain TY-5).